We begin with the raw amino-acid sequence, 585 residues long: Mitochondrial sodium/calcium exchanger protein (585 aa).

An N-terminal signal peptide occupies residues 1 to 26; it reads MASRWLALLWAPVFLCVALILETASG. Residues 27–95 are Extracellular-facing; it reads TGDPSTKAHG…GIFCYFPPNL (69 aa). N46 carries an N-linked (GlcNAc...) asparagine glycan. The helical transmembrane segment at 96–116 threads the bilayer; that stretch reads LPLAITLYVFWLLYLFLILGV. The Cytoplasmic portion of the chain corresponds to 117–140; sequence TAAKFFCPNLSAISTNLKLSHNVA. A helical membrane pass occupies residues 141 to 161; it reads GVTFLAFGNGAPDIFSALVAF. Over 162 to 168 the chain is Extracellular; it reads SDPRTAG. A helical membrane pass occupies residues 169 to 189; sequence LAIGALFGAGVLVTTVVAGGI. Topologically, residues 190–205 are cytoplasmic; it reads TILHPFMAASRPFLRD. The chain crosses the membrane as a helical span at residues 206–226; the sequence is IAFYMVAVFLTFTALYLGRIT. Residues 227-229 lie on the Extracellular side of the membrane; that stretch reads LTW. A helical transmembrane segment spans residues 230–250; that stretch reads ALGYLGLYVFYVVTVIICTWV. The Cytoplasmic portion of the chain corresponds to 251–325; sequence YQRQRSRSLV…KWRTQSISWR (75 aa). S258 carries the post-translational modification Phosphoserine; by PKA. A helical transmembrane segment spans residues 326–346; that stretch reads VLKVVKLPVEFLLLLTVPVVD. The Extracellular portion of the chain corresponds to 347 to 360; the sequence is PDKDDRNWKRPLNC. The chain crosses the membrane as a helical span at residues 361–381; sequence LQLVISPLVLVLTLQSGVYGI. Topologically, residues 382–383 are cytoplasmic; sequence YE. Residues 384–404 traverse the membrane as a helical segment; it reads IGGLLPVWAVVVIVGTALASV. Residues 405-416 lie on the Extracellular side of the membrane; the sequence is TFFATSNREPPR. A helical transmembrane segment spans residues 417–437; sequence LHWLFAFLGFLTSALWINAAA. Residues 438–445 are Cytoplasmic-facing; sequence TEVVNILR. Residues 446 to 466 form a helical membrane-spanning segment; sequence SLGVIFRLSNTVLGLTLLAWG. Topologically, residues 467–491 are extracellular; the sequence is NSIGDAFSDFTLARQGYPRMAFSAC. The chain crosses the membrane as a helical span at residues 492-512; the sequence is FGGIIFNILVGVGLGCLLQII. At 513–525 the chain is on the cytoplasmic side; it reads RNHVVEVKLEPDG. A helical transmembrane segment spans residues 526–546; sequence LLVWVLASALGLSLIFSLVSV. Residues 547 to 559 are Extracellular-facing; that stretch reads PLQCFQLSKAYGL. Residues 560-580 traverse the membrane as a helical segment; that stretch reads CLLLFYICFLVVVLLTEFGVI. Topologically, residues 581 to 585 are cytoplasmic; it reads HLKKA.

This sequence belongs to the Ca(2+):cation antiporter (CaCA) (TC 2.A.19) family. SLC24A subfamily. In terms of processing, phosphorylation at Ser-258 by PKA prevents calcium overload. As to expression, ubiquitously expressed. Expressed in dental tissues.

Its subcellular location is the mitochondrion inner membrane. It localises to the cell membrane. It catalyses the reaction Ca(2+)(in) + 3 Na(+)(out) = Ca(2+)(out) + 3 Na(+)(in). The enzyme catalyses 3 Li(+)(out) + Ca(2+)(in) = 3 Li(+)(in) + Ca(2+)(out). Its activity is regulated as follows. Inhibited by the sodium/calcium exchanger inhibitor CGP-37157. Strongly inhibited by zinc. In terms of biological role, mitochondrial sodium/calcium antiporter that mediates sodium-dependent calcium efflux from mitochondrion, by mediating the exchange of 3 sodium ions per 1 calcium ion. Plays a central role in mitochondrial calcium homeostasis by mediating mitochondrial calcium extrusion: calcium efflux is essential for mitochondrial function and cell survival, notably in cardiomyocytes. Regulates rates of glucose-dependent insulin secretion in pancreatic beta-cells during the first phase of insulin secretion: acts by mediating efflux of calcium from mitochondrion, thereby affecting cytoplasmic calcium responses. Required for store-operated Ca(2+) entry (SOCE) and Ca(2+) release-activated Ca(2+) (CRAC) channel regulation: sodium transport by SLC8B1 leads to promote calcium-shuttling that modulates mitochondrial redox status, thereby regulating SOCE activity. Involved in B-lymphocyte chemotaxis. Able to transport Ca(2+) in exchange of either Li(+) or Na(+), explaining how Li(+) catalyzes Ca(2+) exchange. In contrast to other members of the family its function is independent of K(+). The polypeptide is Mitochondrial sodium/calcium exchanger protein (Mus musculus (Mouse)).